The chain runs to 301 residues: Triplex capsid protein 2 (301 aa).

Belongs to the herpesviridae TRX2 protein family. Interacts with TRX1 and major capisd protein/MCP.

The protein resides in the virion. It is found in the host nucleus. Structural component of the T=16 icosahedral capsid. The capsid is composed of pentamers and hexamers of major capsid protein/MCP, which are linked together by heterotrimers called triplexes. These triplexes are formed by a single molecule of triplex protein 1/TRX1 and two copies of triplex protein 2/TRX2. Additionally, TRX1 is required for efficient transport of TRX2 to the nucleus, which is the site of capsid assembly. This Homo sapiens (Human) protein is Triplex capsid protein 2.